We begin with the raw amino-acid sequence, 399 residues long: Acetylornithine aminotransferase (399 aa).

Pyridoxal 5'-phosphate-binding positions include 97–98 (GA) and F130. R133 contacts N(2)-acetyl-L-ornithine. Residue 215-218 (DEVQ) coordinates pyridoxal 5'-phosphate. The residue at position 244 (K244) is an N6-(pyridoxal phosphate)lysine. T272 is a binding site for N(2)-acetyl-L-ornithine. Residue T273 coordinates pyridoxal 5'-phosphate.

This sequence belongs to the class-III pyridoxal-phosphate-dependent aminotransferase family. ArgD subfamily. In terms of assembly, homodimer. Requires pyridoxal 5'-phosphate as cofactor.

Its subcellular location is the cytoplasm. The enzyme catalyses N(2)-acetyl-L-ornithine + 2-oxoglutarate = N-acetyl-L-glutamate 5-semialdehyde + L-glutamate. It functions in the pathway amino-acid biosynthesis; L-arginine biosynthesis; N(2)-acetyl-L-ornithine from L-glutamate: step 4/4. The protein is Acetylornithine aminotransferase of Mesorhizobium japonicum (strain LMG 29417 / CECT 9101 / MAFF 303099) (Mesorhizobium loti (strain MAFF 303099)).